Consider the following 317-residue polypeptide: Prenyl transferase paxC (317 aa).

Positions 53 and 86 each coordinate substrate. Mg(2+) is bound by residues D93 and D97. The substrate site is built by R102, K186, T187, Q216, N223, and K233.

This sequence belongs to the FPP/GGPP synthase family.

Its pathway is secondary metabolite biosynthesis. Its function is as follows. Prenyl transferase; part of the gene cluster that mediates the biosynthesis of paxalline, a mycotoxin that acts as an inhibitor of mammalian maxi-K channels. PaxG, the geranylgeranyl diphosphate (GGPP) synthase is proposed to catalyze the first step in paxilline biosynthesis. Condensation of indole-3-glycerol phosphate with GGPP by paxC then forms 3-geranylgeranylindole (3-GGI), followed by epoxidation and cyclization of this intermediate (by paxM and paxB) to form paspaline. Paspaline is subsequently converted to 13-desoxypaxilline by paxP, the latter being then converted to paxilline by paxQ. Finally paxilline can be mono- and di-prenylated by paxD. This Penicillium paxilli protein is Prenyl transferase paxC.